Here is a 1578-residue protein sequence, read N- to C-terminus: BRD4-interacting chromatin-remodeling complex-associated protein (1578 aa).

3 disordered regions span residues 80 to 101, 631 to 673, and 725 to 951; these read DILGSPAAGGGGGGGGAPDQPC, PAVT…PSLA, and IVSA…PPPR. Over residues 86–96 the composition is skewed to gly residues; the sequence is AAGGGGGGGGA. Low complexity-rich tracts occupy residues 631-662 and 764-782; these read PAVTTPLPMGLQQPQAQQPPQVPTPQAATQPQ and IPAAAPLKAPGPASSPSLP. Pro residues-rich tracts occupy residues 793–816, 824–841, and 865–888; these read MPSPHPARPPSRPPSRPHSRPPSQ, PSEPTLHPCPPPQGPPTL, and PGPPQPPLRPPSQPPEGPLPPASH. Low complexity predominate over residues 889 to 906; the sequence is LPPASTPSAVASSSEPSA. Ser-929 is modified (phosphoserine). Thr-931 is modified (phosphothreonine). The span at 942-951 shows a compositional bias: pro residues; the sequence is PTAPPPPPPR. At Lys-1067 the chain carries N6-acetyllysine. The tract at residues 1206–1316 is disordered; the sequence is EKPDEYVSSS…NRPPIKTYEA (111 aa). Low complexity-rich tracts occupy residues 1233 to 1247 and 1275 to 1294; these read SHGQSSSSSTSGTSA and ASSSLSSTSSSSSSSSAASS. Lys-1327 participates in a covalent cross-link: Glycyl lysine isopeptide (Lys-Gly) (interchain with G-Cter in SUMO2). Disordered regions lie at residues 1342–1435 and 1457–1578; these read DPVH…PTKV and VLKG…TLNR. Over residues 1346-1370 the composition is skewed to pro residues; sequence QPLPAPTPAKGAEPPPHPAPPPLPP. Position 1427 is a phosphoserine (Ser-1427). Positions 1502-1532 are enriched in polar residues; sequence ASFSSDSPQDDTLTEHLQSAIDSILNLQQAP. Positions 1538–1553 are enriched in pro residues; sequence GPYPHTGPTPGTPTSP.

In terms of assembly, component of the multiprotein chromatin-remodeling complexes SWI/SNF: SWI/SNF-A (BAF), SWI/SNF-B (PBAF) and related complexes. The canonical complex contains a catalytic subunit (either SMARCA4/BRG1/BAF190A or SMARCA2/BRM/BAF190B) and at least SMARCE1, ACTL6A/BAF53, SMARCC1/BAF155, SMARCC2/BAF170, and SMARCB1/SNF5/BAF47. Other subunits specific to each of the complexes may also be present permitting several possible combinations developmentally and tissue specific. Component of the SWI/SNF (GBAF) subcomplex, which includes at least BICRA or BICRAL (mutually exclusive), BRD9, SS18, the core BAF subunits, SMARCA2/BRM, SMARCA4/BRG1/BAF190A, ACTL6A/BAF53, SMARCC1/BAF155, and SMARCD1/BAF60A. Interacts with BRD4; the interaction bridges BRD4 to the GBAF complex.

The protein resides in the nucleus. In terms of biological role, component of SWI/SNF chromatin remodeling subcomplex GBAF that carries out key enzymatic activities, changing chromatin structure by altering DNA-histone contacts within a nucleosome in an ATP-dependent manner. May play a role in BRD4-mediated gene transcription. The chain is BRD4-interacting chromatin-remodeling complex-associated protein from Mus musculus (Mouse).